A 77-amino-acid polypeptide reads, in one-letter code: UPF0401 protein c3666 (77 aa).

Belongs to the UPF0401 family.

This Escherichia coli O6:H1 (strain CFT073 / ATCC 700928 / UPEC) protein is UPF0401 protein c3666.